The chain runs to 370 residues: Queuine tRNA-ribosyltransferase (370 aa).

The active-site Proton acceptor is D89. Substrate is bound by residues 89-93 (DSGGF), D143, Q187, and G214. An RNA binding region spans residues 245–251 (GVGTPED). D264 serves as the catalytic Nucleophile. The RNA binding; important for wobble base 34 recognition stretch occupies residues 269 to 273 (TRNAR). Residues C302, C304, C307, and H333 each coordinate Zn(2+).

It belongs to the queuine tRNA-ribosyltransferase family. In terms of assembly, homodimer. Within each dimer, one monomer is responsible for RNA recognition and catalysis, while the other monomer binds to the replacement base PreQ1. The cofactor is Zn(2+).

It carries out the reaction 7-aminomethyl-7-carbaguanine + guanosine(34) in tRNA = 7-aminomethyl-7-carbaguanosine(34) in tRNA + guanine. The protein operates within tRNA modification; tRNA-queuosine biosynthesis. In terms of biological role, catalyzes the base-exchange of a guanine (G) residue with the queuine precursor 7-aminomethyl-7-deazaguanine (PreQ1) at position 34 (anticodon wobble position) in tRNAs with GU(N) anticodons (tRNA-Asp, -Asn, -His and -Tyr). Catalysis occurs through a double-displacement mechanism. The nucleophile active site attacks the C1' of nucleotide 34 to detach the guanine base from the RNA, forming a covalent enzyme-RNA intermediate. The proton acceptor active site deprotonates the incoming PreQ1, allowing a nucleophilic attack on the C1' of the ribose to form the product. After dissociation, two additional enzymatic reactions on the tRNA convert PreQ1 to queuine (Q), resulting in the hypermodified nucleoside queuosine (7-(((4,5-cis-dihydroxy-2-cyclopenten-1-yl)amino)methyl)-7-deazaguanosine). This chain is Queuine tRNA-ribosyltransferase, found in Aromatoleum aromaticum (strain DSM 19018 / LMG 30748 / EbN1) (Azoarcus sp. (strain EbN1)).